The primary structure comprises 428 residues: Putative ankyrin repeat protein FPV234 (428 aa).

ANK repeat units lie at residues 6–35 (KDDI…DPNV), 39–68 (YQYS…DPNI), 71–100 (FFTP…IVNL), 103–132 (YCLK…DINS), 137–169 (NGKY…DINK), 174–202 (TNTS…NINI), 206–238 (MGRN…DINA), and 242–271 (EGNT…YLSY).

This chain is Putative ankyrin repeat protein FPV234, found in Fowlpox virus (strain NVSL) (FPV).